We begin with the raw amino-acid sequence, 166 residues long: Packaging efficiency factor P6 (166 aa).

The tract at residues I134 to I166 is disordered.

As to quaternary structure, heterodimer of P6 and P9; further multimerizes as hexamers of heterodimers. Part of the dodecameric portal complex that is composed of the packaging efficiency factor P6, the DNA packaging ATPase P9, and the internal heterododecamer P20/P22 which spans the virion inner membrane.

It localises to the virion. Functionally, together with the packaging ATPase P9, forms the external part of the portal vertex that is embeded in the capsid and which plays critical roles in genome packaging and genome ejection. Both proteins multimerize as a single ring-shaped heterdodecamer arranged around a central channel. This chain is Packaging efficiency factor P6 (VI), found in Acinetobacter calcoaceticus (Arthrobacter siderocapsulatus).